The sequence spans 234 residues: Endonuclease V (234 aa).

The Mg(2+) site is built by aspartate 42 and aspartate 108.

It belongs to the endonuclease V family. Requires Mg(2+) as cofactor.

Its subcellular location is the cytoplasm. The enzyme catalyses Endonucleolytic cleavage at apurinic or apyrimidinic sites to products with a 5'-phosphate.. Functionally, DNA repair enzyme involved in the repair of deaminated bases. Selectively cleaves double-stranded DNA at the second phosphodiester bond 3' to a deoxyinosine leaving behind the intact lesion on the nicked DNA. In Geotalea uraniireducens (strain Rf4) (Geobacter uraniireducens), this protein is Endonuclease V.